The primary structure comprises 547 residues: Myrosinase 2 (547 aa).

An N-terminal signal peptide occupies residues 1–28 (MQHNTYIYILTMKLLGFALAILLVVATC). Cystine bridges form between C36–C460, C44–C456, and C236–C244. A beta-D-glucoside-binding positions include Q69, H171, and 216-217 (NQ). N340 carries an N-linked (GlcNAc...) asparagine glycan. Y359 contributes to the a beta-D-glucoside binding site. Residue N384 is glycosylated (N-linked (GlcNAc...) asparagine). A beta-D-glucoside-binding positions include E430, W479, 486–487 (EF), and F495. The Nucleophile role is filled by E430. N-linked (GlcNAc...) asparagine glycosylation occurs at N504.

The protein belongs to the glycosyl hydrolase 1 family. Interacts with MVP1. As to expression, expressed in phloem-associated cells.

It carries out the reaction a thioglucoside + H2O = a sugar + a thiol.. Its function is as follows. May degrade glucosinolates (glucose residue linked by a thioglucoside bound to an amino acid derivative) to glucose, sulfate and any of the products: thiocyanates, isothiocyanates, nitriles, epithionitriles or oxazolidine-2-thiones. These toxic degradation products can deter insect herbivores. Seems to function in abscisic acid (ABA) and methyl jasmonate (MeJA) signaling in guard cells. Functionally redundant with TGG1. This is Myrosinase 2 from Arabidopsis thaliana (Mouse-ear cress).